A 1176-amino-acid polypeptide reads, in one-letter code: Translation initiation factor IF-2 (1176 aa).

Composition is skewed to low complexity over residues 32–44 (IAAKSHSSSISDS), 57–79 (ASPSQPTAPAAKPAPAKPAAGKS), 94–166 (APVA…AAPS), and 193–235 (KPTP…VKPT). 2 disordered regions span residues 32–502 (IAAK…QRQK) and 535–567 (RPAKPKAQQRTAPKPVAAVRKRRKETARQRQRR). A compositionally biased stretch (pro residues) spans 251-270 (APPPASTPRPAPSRPTPRPA). Low complexity-rich tracts occupy residues 388–409 (GRPGAPTRPGAPTRPGMPGGMR) and 439–469 (NRPTEAAGTATPPVARPTAPSAPRRPGFRPG). The segment covering 478-492 (GRPDWDDSAKLEALR) has biased composition (basic and acidic residues). Residues 553–567 (VRKRRKETARQRQRR) are compositionally biased toward basic residues. Residues 668 to 840 (RRPPVVTVMG…LLLVTEVEDL (173 aa)) form the tr-type G domain. Residues 677–684 (GHVDHGKT) are G1. 677–684 (GHVDHGKT) contacts GTP. The G2 stretch occupies residues 702 to 706 (GITQH). Residues 727–730 (DTPG) are G3. GTP is bound by residues 727-731 (DTPGH) and 781-784 (NKID). Positions 781 to 784 (NKID) are G4. Residues 817–819 (SAI) are G5.

The protein belongs to the TRAFAC class translation factor GTPase superfamily. Classic translation factor GTPase family. IF-2 subfamily.

The protein localises to the cytoplasm. In terms of biological role, one of the essential components for the initiation of protein synthesis. Protects formylmethionyl-tRNA from spontaneous hydrolysis and promotes its binding to the 30S ribosomal subunits. Also involved in the hydrolysis of GTP during the formation of the 70S ribosomal complex. This Synechococcus sp. (strain CC9902) protein is Translation initiation factor IF-2.